A 223-amino-acid chain; its full sequence is Phosphoribosylformylglycinamidine synthase subunit PurQ (223 aa).

Residues 3–223 (FAVLVFPGSN…MVKSWREQHV (221 aa)) enclose the Glutamine amidotransferase type-1 domain. C85 acts as the Nucleophile in catalysis. Catalysis depends on residues H193 and E195.

In terms of assembly, part of the FGAM synthase complex composed of 1 PurL, 1 PurQ and 2 PurS subunits.

It localises to the cytoplasm. It carries out the reaction N(2)-formyl-N(1)-(5-phospho-beta-D-ribosyl)glycinamide + L-glutamine + ATP + H2O = 2-formamido-N(1)-(5-O-phospho-beta-D-ribosyl)acetamidine + L-glutamate + ADP + phosphate + H(+). It catalyses the reaction L-glutamine + H2O = L-glutamate + NH4(+). Its pathway is purine metabolism; IMP biosynthesis via de novo pathway; 5-amino-1-(5-phospho-D-ribosyl)imidazole from N(2)-formyl-N(1)-(5-phospho-D-ribosyl)glycinamide: step 1/2. Functionally, part of the phosphoribosylformylglycinamidine synthase complex involved in the purines biosynthetic pathway. Catalyzes the ATP-dependent conversion of formylglycinamide ribonucleotide (FGAR) and glutamine to yield formylglycinamidine ribonucleotide (FGAM) and glutamate. The FGAM synthase complex is composed of three subunits. PurQ produces an ammonia molecule by converting glutamine to glutamate. PurL transfers the ammonia molecule to FGAR to form FGAM in an ATP-dependent manner. PurS interacts with PurQ and PurL and is thought to assist in the transfer of the ammonia molecule from PurQ to PurL. The protein is Phosphoribosylformylglycinamidine synthase subunit PurQ of Staphylococcus aureus (strain MRSA252).